A 418-amino-acid polypeptide reads, in one-letter code: CCA-adding enzyme (418 aa).

ATP-binding residues include S54 and R57. The CTP site is built by S54 and R57. Residues D66, D68, and D118 each contribute to the Mg(2+) site. Residues H141, K161, and Y170 each contribute to the ATP site. The CTP site is built by H141, K161, and Y170.

It belongs to the tRNA nucleotidyltransferase/poly(A) polymerase family. Archaeal CCA-adding enzyme subfamily. Homodimer. The cofactor is Mg(2+).

It catalyses the reaction a tRNA precursor + 2 CTP + ATP = a tRNA with a 3' CCA end + 3 diphosphate. It carries out the reaction a tRNA with a 3' CCA end + 2 CTP + ATP = a tRNA with a 3' CCACCA end + 3 diphosphate. In terms of biological role, catalyzes the addition and repair of the essential 3'-terminal CCA sequence in tRNAs without using a nucleic acid template. Adds these three nucleotides in the order of C, C, and A to the tRNA nucleotide-73, using CTP and ATP as substrates and producing inorganic pyrophosphate. tRNA 3'-terminal CCA addition is required both for tRNA processing and repair. Also involved in tRNA surveillance by mediating tandem CCA addition to generate a CCACCA at the 3' terminus of unstable tRNAs. While stable tRNAs receive only 3'-terminal CCA, unstable tRNAs are marked with CCACCA and rapidly degraded. The polypeptide is CCA-adding enzyme (Pyrobaculum islandicum (strain DSM 4184 / JCM 9189 / GEO3)).